The sequence spans 163 residues: Cyclic pyranopterin monophosphate synthase (163 aa).

Substrate contacts are provided by residues 76 to 78 (LCH) and 114 to 115 (ME). Aspartate 129 is an active-site residue.

The protein belongs to the MoaC family. As to quaternary structure, homohexamer; trimer of dimers.

It carries out the reaction (8S)-3',8-cyclo-7,8-dihydroguanosine 5'-triphosphate = cyclic pyranopterin phosphate + diphosphate. Its pathway is cofactor biosynthesis; molybdopterin biosynthesis. In terms of biological role, catalyzes the conversion of (8S)-3',8-cyclo-7,8-dihydroguanosine 5'-triphosphate to cyclic pyranopterin monophosphate (cPMP). The chain is Cyclic pyranopterin monophosphate synthase from Desulfovibrio desulfuricans (strain ATCC 27774 / DSM 6949 / MB).